The following is a 384-amino-acid chain: DNA dC-&gt;dU-editing enzyme APOBEC-3G (384 aa).

Positions Met-1 to Ser-60 are essential for cytoplasmic localization. The 110-residue stretch at Arg-29–Leu-138 folds into the CMP/dCMP-type deaminase 1 domain. Thr-32 carries the post-translational modification Phosphothreonine; by PKA. Residues Lys-42, Lys-52, and Lys-63 each participate in a (Microbial infection) Glycyl lysine isopeptide (Lys-Gly) (interchain with G-Cter in ubiquitin) cross-link. Residues His-65, Cys-97, and Cys-100 each contribute to the Zn(2+) site. Residues Lys-150 and Lys-163 each participate in a (Microbial infection) Glycyl lysine isopeptide (Lys-Gly) (interchain with G-Cter in ubiquitin) cross-link. Residues Glu-209–Ser-336 are necessary for homooligomerization. The interval Arg-213–Arg-215 is interaction with DNA. The CMP/dCMP-type deaminase 2 domain maps to Gly-214 to Leu-328. At Thr-218 the chain carries Phosphothreonine; by PKA and CAMK2. Lys-249 participates in a covalent cross-link: (Microbial infection) Glycyl lysine isopeptide (Lys-Gly) (interchain with G-Cter in ubiquitin). Position 257 (His-257) interacts with Zn(2+). Glu-259 functions as the Proton donor in the catalytic mechanism. A (Microbial infection) Glycyl lysine isopeptide (Lys-Gly) (interchain with G-Cter in ubiquitin) cross-link involves residue Lys-270. Residues Cys-288 and Cys-291 each contribute to the Zn(2+) site. (Microbial infection) Glycyl lysine isopeptide (Lys-Gly) (interchain with G-Cter in ubiquitin) cross-links involve residues Lys-297, Lys-301, and Lys-303. The segment at Arg-313–Arg-320 is interaction with DNA. Lys-334 is covalently cross-linked ((Microbial infection) Glycyl lysine isopeptide (Lys-Gly) (interchain with G-Cter in ubiquitin)).

The protein belongs to the cytidine and deoxycytidylate deaminase family. As to quaternary structure, homodimer. Homooligomer. Can bind RNA to form ribonucleoprotein complexes of high-molecular-mass (HMM) or low-molecular-mass (LMM). HMM is inactive and heterogeneous in protein composition because of binding nonselectively to cellular RNAs, which in turn are associated with variety of cellular proteins. The LMM form which is enzymatically active has few or no RNAs associated. Its ability to form homooligomer is distinct from its ability to assemble into HMM. Interacts with APOBEC3B, APOBEC3F, MOV10, AGO2, EIF4E, EIF4ENIF1, DCP2 and DDX6 in an RNA-dependent manner. Interacts with AGO1, AGO3 and PKA/PRKACA. In terms of assembly, (Microbial infection) Interacts with HIV-1 Vif; promoting its ubiquitination by a cullin-5-RING E3 ubiquitin-protein ligase complex (ECS complex) hijacked by the HIV-1 Vif. (Microbial infection) Interacts with HIV-1 reverse transcriptase/ribonuclease H. As to quaternary structure, (Microbial infection) Interacts with hepatitis B virus capsid protein. The cofactor is Zn(2+). In terms of processing, (Microbial infection) Following infection by HIV-1, ubiquitinated by a cullin-5-RING E3 ubiquitin-protein ligase complex (ECS complex) hijacked by the HIV-1 Vif protein, leading to its degradation. Deubiquitinated by USP49; leading to stabilization. Post-translationally, phosphorylation at Thr-32 reduces its binding to HIV-1 Vif and subsequent ubiquitination and degradation thus promoting its antiviral activity. As to expression, expressed in spleen, testes, ovary and peripheral blood leukocytes and CD4+ lymphocytes. Also expressed in non-permissive peripheral blood mononuclear cells, and several tumor cell lines; no expression detected in permissive lymphoid and non-lymphoid cell lines. Exists only in the LMM form in peripheral blood-derived resting CD4 T-cells and monocytes, both of which are refractory to HIV-1 infection. LMM is converted to a HMM complex when resting CD4 T-cells are activated or when monocytes are induced to differentiate into macrophages. This change correlates with increased susceptibility of these cells to HIV-1 infection.

It localises to the cytoplasm. It is found in the nucleus. The protein localises to the P-body. The catalysed reaction is a 2'-deoxycytidine in single-stranded DNA + H2O + H(+) = a 2'-deoxyuridine in single-stranded DNA + NH4(+). With respect to regulation, (Microbial infection) Antiviral activity is neutralized by the HIV-1 virion infectivity factor (Vif), that prevents its incorporation into progeny virions by both inhibiting its translation and/or by inducing its ubiquitination and subsequent degradation by the 26S proteasome. Can also be neutralized by simian immunodeficiency virus sooty mangabey monkey virus (SIV-sm) and chimpanzee immunodeficiency virus (SIV-cpz) Vif. DNA deaminase (cytidine deaminase) which acts as an inhibitor of retrovirus replication and retrotransposon mobility via deaminase-dependent and -independent mechanisms. Exhibits potent antiviral activity against Vif-deficient HIV-1. After the penetration of retroviral nucleocapsids into target cells of infection and the initiation of reverse transcription, it can induce the conversion of cytosine to uracil in the minus-sense single-strand viral DNA, leading to G-to-A hypermutations in the subsequent plus-strand viral DNA. The resultant detrimental levels of mutations in the proviral genome, along with a deamination-independent mechanism that works prior to the proviral integration, together exert efficient antiretroviral effects in infected target cells. Selectively targets single-stranded DNA and does not deaminate double-stranded DNA or single- or double-stranded RNA. Exhibits antiviral activity also against simian immunodeficiency viruses (SIVs), hepatitis B virus (HBV), equine infectious anemia virus (EIAV), xenotropic MuLV-related virus (XMRV) and simian foamy virus (SFV). May inhibit the mobility of LTR and non-LTR retrotransposons. This Homo sapiens (Human) protein is DNA dC-&gt;dU-editing enzyme APOBEC-3G.